Consider the following 436-residue polypeptide: tRNA(Ile)-lysidine synthase (436 aa).

27 to 32 serves as a coordination point for ATP; sequence SGGVDS.

This sequence belongs to the tRNA(Ile)-lysidine synthase family.

Its subcellular location is the cytoplasm. The enzyme catalyses cytidine(34) in tRNA(Ile2) + L-lysine + ATP = lysidine(34) in tRNA(Ile2) + AMP + diphosphate + H(+). Ligates lysine onto the cytidine present at position 34 of the AUA codon-specific tRNA(Ile) that contains the anticodon CAU, in an ATP-dependent manner. Cytidine is converted to lysidine, thus changing the amino acid specificity of the tRNA from methionine to isoleucine. This Vibrio vulnificus (strain YJ016) protein is tRNA(Ile)-lysidine synthase.